Consider the following 459-residue polypeptide: Protoheme IX farnesyltransferase (459 aa).

The unknown stretch occupies residues Met-1–Leu-184. Transmembrane regions (helical) follow at residues Phe-9 to Thr-29, Ala-66 to Ala-86, Ala-93 to Met-113, Val-123 to Leu-143, Leu-184 to Gly-204, Ala-211 to Phe-231, Leu-262 to Leu-282, Ala-284 to Pro-304, Trp-325 to Leu-345, His-382 to Gly-402, Leu-403 to Ile-423, and Phe-438 to Val-458. The protoheme IX prenyltransferase stretch occupies residues Met-185–Val-459.

The protein in the C-terminal section; belongs to the UbiA prenyltransferase family. Protoheme IX farnesyltransferase subfamily.

The protein resides in the cell membrane. The enzyme catalyses heme b + (2E,6E)-farnesyl diphosphate + H2O = Fe(II)-heme o + diphosphate. The protein operates within porphyrin-containing compound metabolism; heme O biosynthesis; heme O from protoheme: step 1/1. In terms of biological role, converts heme B (protoheme IX) to heme O by substitution of the vinyl group on carbon 2 of heme B porphyrin ring with a hydroxyethyl farnesyl side group. The polypeptide is Protoheme IX farnesyltransferase (ctaB) (Halobacterium salinarum (strain ATCC 29341 / DSM 671 / R1)).